A 547-amino-acid chain; its full sequence is Leiomodin-2 (547 aa).

Positions Met1–Pro47 are interaction with tropomyosin alpha. 3 interaction with actin regions span residues Met1 to Ser161, Lys162 to Lys497, and Ala521 to Val540. Phosphoserine is present on residues Ser11, Ser15, and Ser24. A coiled-coil region spans residues Ile16–Glu41. Disordered regions lie at residues Lys91 to Lys162 and Met352 to Ser533. Composition is skewed to acidic residues over residues Asp95–Ile104 and Val112–Arg139. Positions Ser113 to Asn148 form a coiled coil. Over residues Gly149–Asn160 the composition is skewed to polar residues. The span at Met352–Glu367 shows a compositional bias: basic and acidic residues. The residue at position 400 (Ser400) is a Phosphoserine. Pro residues predominate over residues Ala419–Leu449. Over residues Gln465–Asn475 the composition is skewed to polar residues. The span at Gln477–Lys487 shows a compositional bias: basic residues. Positions Lys494 to Ser512 are enriched in basic and acidic residues. In terms of domain architecture, WH2 spans Ala521–Val540.

It belongs to the tropomodulin family. Can bind at least three actin monomers and thereby provides a nucleus for actin filament formation. Interacts (via N-terminus) with tropomyosin alpha (TPM1) (via N-terminus). May also interact with TPM2 (via N-terminus). Interacts with FLII. As to expression, specifically expressed in heart and skeletal muscles, with higher levels in heart (at protein level). Not expressed in other tissues.

It localises to the cytoplasm. The protein resides in the myofibril. It is found in the sarcomere. The protein localises to the m line. Its subcellular location is the cytoskeleton. Functionally, mediates nucleation of actin filaments and thereby promotes actin polymerization. Plays a role in the regulation of actin filament length. Required for normal sarcomere organization in the heart, and for normal heart function. The protein is Leiomodin-2 (LMOD2) of Homo sapiens (Human).